Reading from the N-terminus, the 260-residue chain is Tropinone reductase homolog At1g07450 (260 aa).

14–38 (LVTGGSKGIGYAIVEELVGFGARVH) contacts NADP(+). S147 contacts substrate. Residue Y159 is the Proton acceptor of the active site.

It belongs to the short-chain dehydrogenases/reductases (SDR) family. SDR65C subfamily.

The sequence is that of Tropinone reductase homolog At1g07450 from Arabidopsis thaliana (Mouse-ear cress).